A 638-amino-acid chain; its full sequence is Zinc finger protein 143 (638 aa).

At methionine 1 the chain carries N-acetylmethionine. Residue lysine 213 forms a Glycyl lysine isopeptide (Lys-Gly) (interchain with G-Cter in SUMO2) linkage. C2H2-type zinc fingers lie at residues 237-261 (FRCK…ERSH), 267-291 (YQCE…FRTH), 297-321 (YRCS…IRTH), and 327-351 (FKCP…IRTH). Threonine 352 bears the Phosphothreonine mark. C2H2-type zinc fingers lie at residues 357–381 (YYCT…VRIH), 387–411 (YVCT…HVVH), and 417–440 (YNCN…RTAH). A Glycyl lysine isopeptide (Lys-Gly) (interchain with G-Cter in SUMO2) cross-link involves residue lysine 406.

Belongs to the GLI C2H2-type zinc-finger protein family. Interacts with CHD8. Forms a complex with HCFC1 and ZNF143.

The protein resides in the nucleus. Its function is as follows. Transcriptional activator. Activates the gene for selenocysteine tRNA (tRNAsec). Binds to the SPH motif of small nuclear RNA (snRNA) gene promoters. Participates in efficient U6 RNA polymerase III transcription via its interaction with CHD8. In complex with HCFC1 and ZNF143, regulates the expression of several genes, including AP2S1, ESCO2, OPHN1, RBL1, UBXN8 and ZNF32. This is Zinc finger protein 143 (Znf143) from Mus musculus (Mouse).